The sequence spans 159 residues: Ribosomal RNA large subunit methyltransferase H (159 aa).

S-adenosyl-L-methionine contacts are provided by L76 and G108.

It belongs to the RNA methyltransferase RlmH family. Homodimer.

It is found in the cytoplasm. The catalysed reaction is pseudouridine(1915) in 23S rRNA + S-adenosyl-L-methionine = N(3)-methylpseudouridine(1915) in 23S rRNA + S-adenosyl-L-homocysteine + H(+). Its function is as follows. Specifically methylates the pseudouridine at position 1915 (m3Psi1915) in 23S rRNA. This is Ribosomal RNA large subunit methyltransferase H from Lactiplantibacillus plantarum (strain ATCC BAA-793 / NCIMB 8826 / WCFS1) (Lactobacillus plantarum).